The following is a 339-amino-acid chain: MSRIIWKGAITFGLVNIPVVLRPASRSQTLDLDLLDVRDMAPVGYQRINKSTGKPVDKEYIVKGYQYAKDEYVLLNEEDFRQANVEATQTVDIVSFVDAQSIPPYYFDTPYYLEPDKRGERGYALLHETMRRTGRAALALVVLRARQHLAAMLVHGDALVLNTMRFADEVLPISELRLPKATTGKPTGAHAREIEMATKLVEDMSEDWEPEQYRDSYRDDLMARIEEKIDSGKTHQLTPPAEEEEAPRQGAKVIDMVALLRQSLGQRGKEDKEDATPARRKAPARHAAARKQPAAKRAATPPAKRASTAAKTKRAPAKRESHAPAARKSSSTTRRKHAA.

In terms of domain architecture, Ku spans 10 to 187 (ITFGLVNIPV…LPKATTGKPT (178 aa)). Disordered stretches follow at residues 230–251 (DSGKTHQLTPPAEEEEAPRQGA) and 263–339 (SLGQ…KHAA). Basic and acidic residues predominate over residues 267–277 (RGKEDKEDATP). Basic residues predominate over residues 278–289 (ARRKAPARHAAA). The span at 290–310 (RKQPAAKRAATPPAKRASTAA) shows a compositional bias: low complexity.

Belongs to the prokaryotic Ku family. As to quaternary structure, homodimer. Interacts with LigD.

Functionally, with LigD forms a non-homologous end joining (NHEJ) DNA repair enzyme, which repairs dsDNA breaks with reduced fidelity. Binds linear dsDNA with 5'- and 3'- overhangs but not closed circular dsDNA nor ssDNA. Recruits and stimulates the ligase activity of LigD. The protein is Non-homologous end joining protein Ku of Cupriavidus necator (strain ATCC 17699 / DSM 428 / KCTC 22496 / NCIMB 10442 / H16 / Stanier 337) (Ralstonia eutropha).